Consider the following 244-residue polypeptide: ATP synthase subunit a (244 aa).

7 consecutive transmembrane segments (helical) span residues 20–40 (FFDI…VIVI), 81–101 (GILF…LNVM), 113–133 (QLLV…IWGF), 140–160 (FLNI…LVFI), 176–196 (LFAN…AAIY), 202–222 (FIGI…LGIA), and 223–243 (FLQA…IINL).

The protein belongs to the ATPase A chain family. In terms of assembly, F-type ATPases have 2 components, CF(1) - the catalytic core - and CF(0) - the membrane proton channel. CF(1) has five subunits: alpha(3), beta(3), gamma(1), delta(1), epsilon(1). CF(0) has three main subunits: a, b and c.

It is found in the mitochondrion inner membrane. Mitochondrial membrane ATP synthase (F(1)F(0) ATP synthase or Complex V) produces ATP from ADP in the presence of a proton gradient across the membrane which is generated by electron transport complexes of the respiratory chain. F-type ATPases consist of two structural domains, F(1) - containing the extramembraneous catalytic core and F(0) - containing the membrane proton channel, linked together by a central stalk and a peripheral stalk. During catalysis, ATP synthesis in the catalytic domain of F(1) is coupled via a rotary mechanism of the central stalk subunits to proton translocation. Key component of the proton channel; it may play a direct role in the translocation of protons across the membrane. The polypeptide is ATP synthase subunit a (atp6) (Dictyostelium discoideum (Social amoeba)).